The following is a 412-amino-acid chain: 1-deoxy-D-xylulose 5-phosphate reductoisomerase (412 aa).

Positions 5, 6, 7, 8, 31, 32, 33, and 125 each coordinate NADPH. 1-deoxy-D-xylulose 5-phosphate is bound at residue Lys126. An NADPH-binding site is contributed by Glu127. Residue Asp151 participates in Mn(2+) binding. 4 residues coordinate 1-deoxy-D-xylulose 5-phosphate: Ser152, Glu153, Ser189, and His212. Mn(2+) is bound at residue Glu153. An NADPH-binding site is contributed by Gly218. 1-deoxy-D-xylulose 5-phosphate is bound by residues Ser225, Asn230, Lys231, and Glu234. Residue Glu234 coordinates Mn(2+).

Belongs to the DXR family. Mg(2+) is required as a cofactor. Mn(2+) serves as cofactor.

The catalysed reaction is 2-C-methyl-D-erythritol 4-phosphate + NADP(+) = 1-deoxy-D-xylulose 5-phosphate + NADPH + H(+). Its pathway is isoprenoid biosynthesis; isopentenyl diphosphate biosynthesis via DXP pathway; isopentenyl diphosphate from 1-deoxy-D-xylulose 5-phosphate: step 1/6. In terms of biological role, catalyzes the NADPH-dependent rearrangement and reduction of 1-deoxy-D-xylulose-5-phosphate (DXP) to 2-C-methyl-D-erythritol 4-phosphate (MEP). The protein is 1-deoxy-D-xylulose 5-phosphate reductoisomerase of Prochlorococcus marinus (strain SARG / CCMP1375 / SS120).